The primary structure comprises 230 residues: Demethylmenaquinone methyltransferase (230 aa).

Residues threonine 57, aspartate 77, and 101–102 (DI) each bind S-adenosyl-L-methionine.

Belongs to the class I-like SAM-binding methyltransferase superfamily. MenG/UbiE family.

The catalysed reaction is a 2-demethylmenaquinol + S-adenosyl-L-methionine = a menaquinol + S-adenosyl-L-homocysteine + H(+). The protein operates within quinol/quinone metabolism; menaquinone biosynthesis; menaquinol from 1,4-dihydroxy-2-naphthoate: step 2/2. Its function is as follows. Methyltransferase required for the conversion of demethylmenaquinol (DMKH2) to menaquinol (MKH2). The sequence is that of Demethylmenaquinone methyltransferase from Chlamydia pneumoniae (Chlamydophila pneumoniae).